Here is a 389-residue protein sequence, read N- to C-terminus: Probable L-tyrosine/L-aspartate decarboxylase (389 aa).

Residue Lys233 is modified to N6-(pyridoxal phosphate)lysine.

Belongs to the group II decarboxylase family. MfnA subfamily. The cofactor is pyridoxal 5'-phosphate.

It catalyses the reaction L-tyrosine + H(+) = tyramine + CO2. The enzyme catalyses L-aspartate + H(+) = beta-alanine + CO2. It functions in the pathway cofactor biosynthesis; methanofuran biosynthesis. It participates in cofactor biosynthesis; coenzyme A biosynthesis. In terms of biological role, catalyzes the decarboxylation of L-tyrosine to produce tyramine for methanofuran biosynthesis. Can also catalyze the decarboxylation of L-aspartate to produce beta-alanine for coenzyme A (CoA) biosynthesis. The protein is Probable L-tyrosine/L-aspartate decarboxylase of Methanosphaera stadtmanae (strain ATCC 43021 / DSM 3091 / JCM 11832 / MCB-3).